Here is a 150-residue protein sequence, read N- to C-terminus: Large ribosomal subunit protein bL9 (150 aa).

It belongs to the bacterial ribosomal protein bL9 family.

In terms of biological role, binds to the 23S rRNA. The polypeptide is Large ribosomal subunit protein bL9 (Shewanella putrefaciens (strain CN-32 / ATCC BAA-453)).